The following is a 347-amino-acid chain: Phenylalanine--tRNA ligase alpha subunit (347 aa).

Glutamate 261 serves as a coordination point for Mg(2+).

The protein belongs to the class-II aminoacyl-tRNA synthetase family. Phe-tRNA synthetase alpha subunit type 1 subfamily. Tetramer of two alpha and two beta subunits. Mg(2+) serves as cofactor.

It is found in the cytoplasm. The catalysed reaction is tRNA(Phe) + L-phenylalanine + ATP = L-phenylalanyl-tRNA(Phe) + AMP + diphosphate + H(+). The sequence is that of Phenylalanine--tRNA ligase alpha subunit from Streptococcus thermophilus (strain ATCC BAA-491 / LMD-9).